The chain runs to 960 residues: Cyclin-dependent kinase-like 5 (960 aa).

Residues 13–297 enclose the Protein kinase domain; that stretch reads FEILGVVGEG…TEQCLNHPTF (285 aa). ATP is bound by residues 19–27 and K42; that span reads VGEGAYGVV. D135 functions as the Proton acceptor in the catalytic mechanism. Disordered regions lie at residues 300–349, 382–566, 646–834, and 848–960; these read QRLL…IQNL, KTYQ…RHSK, SPQP…TQSQ, and ASNH…ETAL. Polar residues-rich tracts occupy residues 319 to 336 and 382 to 402; these read ESSTLSNRNQAGKSTALQ and KTYQASSQPGSTSKDLTNNNI. S407 bears the Phosphoserine mark. Residues 407–417 show a composition bias toward basic and acidic residues; the sequence is SPKEAKSKTEF. Polar residues-rich tracts occupy residues 434 to 462, 473 to 482, and 510 to 548; these read LKSNSRSQQNRHSFMESSQSKAGTLQPNE, IPQSSRSPSY, and EPSTSRYFPSSCLDLNSPTSPTPTRHSDTRTLLSPSGRN. S479 is modified (phosphoserine). Composition is skewed to basic and acidic residues over residues 549–559 and 679–704; these read NRNEGTLDSRR and QKSEGGVYHDPHSDDGTAPKENRHLY. Residue S720 is modified to Phosphoserine. Over residues 728 to 748 the composition is skewed to polar residues; it reads HENNVSTRVSSLPSESSSGTN. S761 carries the phosphoserine modification. Positions 769 to 778 are enriched in basic and acidic residues; the sequence is EQLKEKEKQG. Positions 791–816 are enriched in polar residues; sequence QTVPNSDSPDLLTLQKSIHSASTPSS. Basic and acidic residues predominate over residues 817–827; it reads RPKEWRPEKIS. Polar residues-rich tracts occupy residues 862–872, 880–890, and 914–928; these read LTAQQTKNSFS, SQASGGSSNIR, and SSVTRSATEGPSYSE.

Belongs to the protein kinase superfamily. CMGC Ser/Thr protein kinase family. CDC2/CDKX subfamily. As to quaternary structure, interacts with MECP2. Post-translationally, autophosphorylated. Expressed in brain, lung, kidney, prostate, ovary, placenta, pancreas and testis. In terms of tissue distribution, predominant transcript in brain.

Its subcellular location is the nucleus. The protein localises to the cytoplasm. The protein resides in the cytoskeleton. It localises to the cilium basal body. It is found in the microtubule organizing center. Its subcellular location is the centrosome. The catalysed reaction is L-seryl-[protein] + ATP = O-phospho-L-seryl-[protein] + ADP + H(+). The enzyme catalyses L-threonyl-[protein] + ATP = O-phospho-L-threonyl-[protein] + ADP + H(+). Its function is as follows. Mediates phosphorylation of MECP2. May regulate ciliogenesis. The protein is Cyclin-dependent kinase-like 5 of Homo sapiens (Human).